A 187-amino-acid chain; its full sequence is Elongation factor P (187 aa).

Belongs to the elongation factor P family.

It is found in the cytoplasm. It functions in the pathway protein biosynthesis; polypeptide chain elongation. Functionally, involved in peptide bond synthesis. Stimulates efficient translation and peptide-bond synthesis on native or reconstituted 70S ribosomes in vitro. Probably functions indirectly by altering the affinity of the ribosome for aminoacyl-tRNA, thus increasing their reactivity as acceptors for peptidyl transferase. This is Elongation factor P from Zymomonas mobilis subsp. mobilis (strain ATCC 31821 / ZM4 / CP4).